A 263-amino-acid chain; its full sequence is Indolethylamine N-methyltransferase (263 aa).

Lys13 carries the N6-succinyllysine modification. S-adenosyl-L-methionine-binding positions include Tyr20, Tyr25, Gly63, Tyr69, 85–87 (DFT), and Asn90. Position 96 is an N6-succinyllysine (Lys96). Residues 142–143 (DV) and Leu163 contribute to the S-adenosyl-L-methionine site.

It belongs to the class I-like SAM-binding methyltransferase superfamily. NNMT/PNMT/TEMT family. As to quaternary structure, monomer. As to expression, widely expressed. The highest levels were in thyroid, adrenal gland, adult and fetal lung. Intermediate levels in heart, placenta, skeletal muscle, testis, small intestine, pancreas, stomach, spinal cord, lymph node and trachea. Very low levels in adult and fetal kidney and liver, in adult spleen, thymus, ovary, colon and bone marrow. Not expressed in peripheral blood leukocytes and brain.

It is found in the cytoplasm. It carries out the reaction a tertiary amine + S-adenosyl-L-methionine = a methylated tertiary amine + S-adenosyl-L-homocysteine + H(+). It catalyses the reaction a secondary amine + S-adenosyl-L-methionine = a methylated secondary amine + S-adenosyl-L-homocysteine + H(+). The enzyme catalyses a primary amine + S-adenosyl-L-methionine = a methylated primary amine + S-adenosyl-L-homocysteine + H(+). The catalysed reaction is dimethyl sulfide + S-adenosyl-L-methionine = trimethylsulfonium + S-adenosyl-L-homocysteine. Its function is as follows. Functions as a thioether S-methyltransferase and is active with a variety of thioethers and the corresponding selenium and tellurium compounds, including 3-methylthiopropionaldehyde, dimethyl selenide, dimethyl telluride, 2-methylthioethylamine, 2-methylthioethanol, methyl-n-propyl sulfide and diethyl sulfide. Plays an important role in the detoxification of selenium compounds. Catalyzes the N-methylation of tryptamine and structurally related compounds. The chain is Indolethylamine N-methyltransferase (INMT) from Homo sapiens (Human).